Reading from the N-terminus, the 220-residue chain is Probable transcriptional regulator NRG2 (220 aa).

2 C2H2-type zinc fingers span residues 153 to 175 (HFCK…NRIH) and 181 to 205 (HICP…YRTH).

The protein localises to the nucleus. Functionally, transcriptional repressor. The protein is Probable transcriptional regulator NRG2 (NRG2) of Saccharomyces cerevisiae (strain ATCC 204508 / S288c) (Baker's yeast).